The following is a 121-amino-acid chain: Small ribosomal subunit protein uS13 (121 aa).

Residues 91–121 (HRMSLPVRGQRTRTNARTRRGSRKTVAGRKK) are disordered. The segment covering 100-121 (QRTRTNARTRRGSRKTVAGRKK) has biased composition (basic residues).

The protein belongs to the universal ribosomal protein uS13 family. As to quaternary structure, part of the 30S ribosomal subunit. Forms a loose heterodimer with protein S19. Forms two bridges to the 50S subunit in the 70S ribosome.

Functionally, located at the top of the head of the 30S subunit, it contacts several helices of the 16S rRNA. In the 70S ribosome it contacts the 23S rRNA (bridge B1a) and protein L5 of the 50S subunit (bridge B1b), connecting the 2 subunits; these bridges are implicated in subunit movement. Contacts the tRNAs in the A and P-sites. The sequence is that of Small ribosomal subunit protein uS13 from Prochlorococcus marinus (strain MIT 9211).